The primary structure comprises 360 residues: DNA replication and repair protein RecF (360 aa).

Residue 30-37 participates in ATP binding; that stretch reads GQNGSGKT.

The protein belongs to the RecF family.

It localises to the cytoplasm. Functionally, the RecF protein is involved in DNA metabolism; it is required for DNA replication and normal SOS inducibility. RecF binds preferentially to single-stranded, linear DNA. It also seems to bind ATP. The sequence is that of DNA replication and repair protein RecF from Shewanella baltica (strain OS223).